We begin with the raw amino-acid sequence, 197 residues long: MFLYEKNFDLQKKKALESLNDALEKGLVDSDIISLLNKINSLKNYFTTSSCSGRISIMQMPDLGDKLNAIWLGKWHREVKIEEVLDTINKHDGGMLWFMVHSPILHVSAKTLEDAVELLNLAMACGFKHSNIKSVSHKKLVVEIRSTERMDIPLGSDGELWVNESYLVKIVSMANLQLRRTKEKLRKLEDEIQKLKK.

It belongs to the TYW3 family.

The enzyme catalyses 4-demethyl-7-[(3S)-3-amino-3-carboxypropyl]wyosine(37) in tRNA(Phe) + S-adenosyl-L-methionine = 7-[(3S)-3-amino-3-carboxypropyl]wyosine(37) in tRNA(Phe) + S-adenosyl-L-homocysteine + H(+). Functionally, S-adenosyl-L-methionine-dependent methyltransferase that acts as a component of the wyosine derivatives biosynthesis pathway. Probably methylates N-4 position of wybutosine-86 to produce wybutosine-72. The polypeptide is tRNA(Phe) 7-((3-amino-3-carboxypropyl)-4-demethylwyosine(37)-N(4))-methyltransferase (Thermococcus sibiricus (strain DSM 12597 / MM 739)).